The sequence spans 37 residues: Myo-inositol-binding protein (37 aa).

Belongs to the bacterial solute-binding protein 2 family.

The protein localises to the periplasm. The protein is Myo-inositol-binding protein of Pseudomonas sp.